Reading from the N-terminus, the 386-residue chain is 2,3-diketo-5-methylthiopentyl-1-phosphate enolase (386 aa).

Lysine 85 acts as the Proton acceptor in catalysis. Substrate is bound by residues lysine 131, 157 to 160 (KDDE), histidine 248, glycine 316, and 338 to 339 (GT). Residues lysine 157, aspartate 159, and glutamate 160 each coordinate Mg(2+). The residue at position 157 (lysine 157) is an N6-carboxylysine.

This sequence belongs to the RuBisCO large chain family. Type IV subfamily. Homodimer. Mg(2+) serves as cofactor.

It carries out the reaction 5-methylsulfanyl-2,3-dioxopentyl phosphate = 2-hydroxy-5-methylsulfanyl-3-oxopent-1-enyl phosphate. It functions in the pathway amino-acid biosynthesis; L-methionine biosynthesis via salvage pathway; L-methionine from S-methyl-5-thio-alpha-D-ribose 1-phosphate: step 3/6. In terms of biological role, catalyzes the enolization of 2,3-diketo-5-methylthiopentyl-1-phosphate (DK-MTP-1-P) into 2-hydroxy-3-keto-5-methylthiopentenyl-1-phosphate (HK-MTPenyl-1-P). The polypeptide is 2,3-diketo-5-methylthiopentyl-1-phosphate enolase (Microcystis aeruginosa (strain NIES-843 / IAM M-2473)).